We begin with the raw amino-acid sequence, 130 residues long: Small ribosomal subunit protein uS9 (130 aa).

Residues 104–130 (LTRDPRMKERRKYGLKKARKAPQFSKR) are disordered. Residues 111–130 (KERRKYGLKKARKAPQFSKR) show a composition bias toward basic residues.

Belongs to the universal ribosomal protein uS9 family.

In Moorella thermoacetica (strain ATCC 39073 / JCM 9320), this protein is Small ribosomal subunit protein uS9.